The following is a 377-amino-acid chain: 2-aminoethylphosphonate--pyruvate transaminase (377 aa).

The residue at position 194 (K194) is an N6-(pyridoxal phosphate)lysine.

The protein belongs to the class-V pyridoxal-phosphate-dependent aminotransferase family. PhnW subfamily. As to quaternary structure, homodimer. It depends on pyridoxal 5'-phosphate as a cofactor.

It carries out the reaction (2-aminoethyl)phosphonate + pyruvate = phosphonoacetaldehyde + L-alanine. Involved in phosphonate degradation. This chain is 2-aminoethylphosphonate--pyruvate transaminase, found in Cupriavidus necator (strain ATCC 17699 / DSM 428 / KCTC 22496 / NCIMB 10442 / H16 / Stanier 337) (Ralstonia eutropha).